The sequence spans 156 residues: Snaclec A5 (156 aa).

A signal peptide spans 1–23 (MGRSISVSFGLLVVFLSLSGTGA). Disulfide bonds link cysteine 27/cysteine 38, cysteine 55/cysteine 154, and cysteine 129/cysteine 146. The region spanning 34–155 (HEGHCYKVFN…CGKPYRFTCE (122 aa)) is the C-type lectin domain.

This sequence belongs to the snaclec family. Heterodimer; disulfide-linked. Expressed by the venom gland.

Its subcellular location is the secreted. Interferes with one step of hemostasis (modulation of platelet aggregation, or coagulation cascade, for example). In Macrovipera lebetinus (Levantine viper), this protein is Snaclec A5.